The primary structure comprises 177 residues: ATP synthase subunit b (177 aa).

A helical membrane pass occupies residues 29-49 (FFFVLAIFLIVLAVIGTFVVP).

Belongs to the ATPase B chain family. As to quaternary structure, F-type ATPases have 2 components, F(1) - the catalytic core - and F(0) - the membrane proton channel. F(1) has five subunits: alpha(3), beta(3), gamma(1), delta(1), epsilon(1). F(0) has three main subunits: a(1), b(2) and c(10-14). The alpha and beta chains form an alternating ring which encloses part of the gamma chain. F(1) is attached to F(0) by a central stalk formed by the gamma and epsilon chains, while a peripheral stalk is formed by the delta and b chains.

It localises to the cell membrane. In terms of biological role, f(1)F(0) ATP synthase produces ATP from ADP in the presence of a proton or sodium gradient. F-type ATPases consist of two structural domains, F(1) containing the extramembraneous catalytic core and F(0) containing the membrane proton channel, linked together by a central stalk and a peripheral stalk. During catalysis, ATP synthesis in the catalytic domain of F(1) is coupled via a rotary mechanism of the central stalk subunits to proton translocation. Its function is as follows. Component of the F(0) channel, it forms part of the peripheral stalk, linking F(1) to F(0). This chain is ATP synthase subunit b, found in Mycolicibacterium paratuberculosis (strain ATCC BAA-968 / K-10) (Mycobacterium paratuberculosis).